The primary structure comprises 820 residues: Phenylalanine--tRNA ligase beta subunit (820 aa).

The 112-residue stretch at 39–150 folds into the tRNA-binding domain; the sequence is PAPVGGVLLV…GTAAPGTPLR (112 aa). Positions 435-510 constitute a B5 domain; the sequence is EVPQTITTTG…RLHGFTELPE (76 aa). Residues D488, D494, E497, and E498 each coordinate Mg(2+). The region spanning 727-818 is the FDX-ACB domain; sequence SRAPAAWRDL…AVKARGWAIR (92 aa).

The protein belongs to the phenylalanyl-tRNA synthetase beta subunit family. Type 1 subfamily. Tetramer of two alpha and two beta subunits. Mg(2+) is required as a cofactor.

The protein resides in the cytoplasm. The catalysed reaction is tRNA(Phe) + L-phenylalanine + ATP = L-phenylalanyl-tRNA(Phe) + AMP + diphosphate + H(+). In Deinococcus radiodurans (strain ATCC 13939 / DSM 20539 / JCM 16871 / CCUG 27074 / LMG 4051 / NBRC 15346 / NCIMB 9279 / VKM B-1422 / R1), this protein is Phenylalanine--tRNA ligase beta subunit (pheT).